A 61-amino-acid polypeptide reads, in one-letter code: Metallothionein-1B (61 aa).

The interval 1-29 (MDPNCSCVAGESCTCAGSCKCKQCRCASC) is beta. Positions 5, 7, 13, 15, 19, 21, 24, 26, 29, 33, 34, 36, 37, 41, 44, 48, 50, 57, 59, and 60 each coordinate a divalent metal cation. The alpha stretch occupies residues 30–61 (KKSCCSCCPVGCAKCAQGCVCKGASDKCSCCA).

Belongs to the metallothionein superfamily. Type 1 family.

Its function is as follows. Metallothioneins have a high content of cysteine residues that bind various heavy metals; these proteins are transcriptionally regulated by both heavy metals and glucocorticoids. In Equus caballus (Horse), this protein is Metallothionein-1B.